Consider the following 531-residue polypeptide: Polypyrimidine tract-binding protein 2 (531 aa).

Met-1 carries the N-acetylmethionine modification. Phosphoserine is present on residues Ser-26 and Ser-27. 2 consecutive RRM domains span residues 59-133 and 181-257; these read RVLH…YSNH and LRII…FSKL. Residue Ser-308 is modified to Phosphoserine. RRM domains lie at 338–412 and 455–529; these read TVLL…LSKH and ATLH…FSKS.

As to quaternary structure, monomer. Interacts with NOVA1; the interaction is direct. Identified in a mRNP complex, at least composed of DHX9, DDX3X, ELAVL1, HNRNPU, IGF2BP1, ILF3, PABPC1, PCBP2, PTBP2, STAU1, STAU2, SYNCRIP and YBX1. Part of a ternary complex containing KHSRP and HNRPH1. Interacts with NOVA2; the interaction is direct. In terms of tissue distribution, mainly expressed in brain although also detected in other tissues like heart and skeletal muscle. Isoform 1 and isoform 2 are specifically expressed in neuronal tissues. Isoform 3 and isoform 4 are expressed in non-neuronal tissues. Isoform 5 and isoform 6 are truncated forms expressed in non-neuronal tissues.

Its subcellular location is the nucleus. In terms of biological role, RNA-binding protein which binds to intronic polypyrimidine tracts and mediates negative regulation of exons splicing. May antagonize in a tissue-specific manner the ability of NOVA1 to activate exon selection. In addition to its function in pre-mRNA splicing, plays also a role in the regulation of translation. Reduced affinity for RNA. The sequence is that of Polypyrimidine tract-binding protein 2 from Homo sapiens (Human).